We begin with the raw amino-acid sequence, 703 residues long: Peptide transporter CstA (703 aa).

16 helical membrane-spanning segments follow: residues 6–26, 29–49, 87–107, 118–138, 162–182, 190–210, 221–241, 256–276, 282–302, 319–339, 374–394, 463–483, 514–534, 547–567, 574–594, and 660–680; these read TKIL…YLAL, GESV…MIGY, VLFG…GPIL, LWIL…VLFI, VAMV…AMVV, PWGL…GIYM, ASII…VIAA, LAIV…WFLL, LSTF…VLVA, GPVF…CGAI, AVAI…YFAI, LMAF…LTAV, GLLA…QGAI, FGVS…TILV, YTWV…YGGI, and AILC…CIGI.

It belongs to the peptide transporter carbon starvation (CstA) (TC 2.A.114) family.

It is found in the cell inner membrane. In terms of biological role, involved in the uptake of dipeptides and tripeptides. May influence host-pathogen interactions. Involved in motility and agglutination, and has a role in stimulation of dendritic cells. This is Peptide transporter CstA from Campylobacter jejuni subsp. jejuni serotype O:2 (strain ATCC 700819 / NCTC 11168).